Reading from the N-terminus, the 391-residue chain is Phosphoprotein (391 aa).

3 positions are modified to phosphothreonine: Thr-10, Thr-16, and Thr-39. Positions 55–65 are enriched in polar residues; the sequence is KNIQYPTTSHQ. The disordered stretch occupies residues 55-90; that stretch reads KNIQYPTTSHQGSKSKGRGSGARPIIVSSSEGGTGG. Position 69 is a phosphoserine (Ser-69). Residues Thr-91, Thr-150, and Thr-165 each carry the phosphothreonine modification. The interval 145 to 208 is disordered; that stretch reads TSTPVTEFKR…PQQDSTPANV (64 aa). Ser-188 is modified (phosphoserine). The tract at residues 216-279 is multimerization; the sequence is ISANEIMDLL…MATVKIMDPG (64 aa). The stretch at 218–245 forms a coiled coil; it reads ANEIMDLLRGMDARLQHLEQKVDKVLAQ. At Thr-250 the chain carries Phosphothreonine. Phosphoserine is present on Ser-257. Residues Thr-258 and Thr-282 each carry the phosphothreonine modification. Phosphoserine occurs at positions 292 and 294. Thr-298 is subject to Phosphothreonine. 2 positions are modified to phosphoserine: Ser-301 and Ser-374. The interaction with the nucleoprotein stretch occupies residues 343 to 391; that stretch reads AGRKVMITKMITDCVANPQMKQVFEQRLAKASTEDALNDIKRDIIRSAI. Thr-375 carries the post-translational modification Phosphothreonine.

The protein belongs to the rubulavirus/avulavirus P protein family. Homotetramer. Interacts (via multimerization domain) with polymerase L; this interaction forms the polymerase L-P complex. Interacts (via N-terminus) with N0 (via Ncore); this interaction allows P to chaperon N0 to avoid N polymerization before encapsidation. Interacts (via C-terminus) with N-RNA template; this interaction positions the polymerase on the template for both transcription and replication. Interacts with host RPS6KB1 kinase; this interaction may play a role in the viral replication and transcription.

Functionally, essential cofactor of the RNA polymerase L that plays a central role in the transcription and replication by forming the polymerase complex with RNA polymerase L and recruiting L to the genomic N-RNA template for RNA synthesis. Also plays a central role in the encapsidation of nascent RNA chains by forming the encapsidation complex with the nucleocapsid protein N (N-P complex). Acts as a chaperone for newly synthesized free N protein, so-called N0, allowing encapsidation of nascent RNA chains during replication. The nucleoprotein protein N prevents excessive phosphorylation of P, which leads to down-regulation of viral transcription/ replication. Participates, together with N, in the formation of viral factories (viroplasms), which are large inclusions in the host cytoplasm where replication takes place. The protein is Phosphoprotein of Mumps virus genotype B (strain Miyahara vaccine) (MuV).